Consider the following 611-residue polypeptide: Dihydroxy-acid dehydratase (611 aa).

Asp81 serves as a coordination point for Mg(2+). Residue Cys122 participates in [2Fe-2S] cluster binding. Residues Asp123 and Lys124 each coordinate Mg(2+). Lys124 is modified (N6-carboxylysine). Cys195 is a [2Fe-2S] cluster binding site. Residue Glu491 participates in Mg(2+) binding. The Proton acceptor role is filled by Ser517.

It belongs to the IlvD/Edd family. In terms of assembly, homodimer. Requires [2Fe-2S] cluster as cofactor. Mg(2+) serves as cofactor.

The enzyme catalyses (2R)-2,3-dihydroxy-3-methylbutanoate = 3-methyl-2-oxobutanoate + H2O. It catalyses the reaction (2R,3R)-2,3-dihydroxy-3-methylpentanoate = (S)-3-methyl-2-oxopentanoate + H2O. It participates in amino-acid biosynthesis; L-isoleucine biosynthesis; L-isoleucine from 2-oxobutanoate: step 3/4. Its pathway is amino-acid biosynthesis; L-valine biosynthesis; L-valine from pyruvate: step 3/4. Its function is as follows. Functions in the biosynthesis of branched-chain amino acids. Catalyzes the dehydration of (2R,3R)-2,3-dihydroxy-3-methylpentanoate (2,3-dihydroxy-3-methylvalerate) into 2-oxo-3-methylpentanoate (2-oxo-3-methylvalerate) and of (2R)-2,3-dihydroxy-3-methylbutanoate (2,3-dihydroxyisovalerate) into 2-oxo-3-methylbutanoate (2-oxoisovalerate), the penultimate precursor to L-isoleucine and L-valine, respectively. In Histophilus somni (strain 129Pt) (Haemophilus somnus), this protein is Dihydroxy-acid dehydratase.